Reading from the N-terminus, the 2375-residue chain is CCR4-NOT transcription complex subunit 1 (2375 aa).

Short sequence motifs (LXXLL) lie at residues 153 to 157 (LPDLL), 181 to 185 (LHLLL), and 223 to 227 (LAPLL). Ser318 is subject to Phosphoserine. The short motif at 570–574 (LSMLL) is the LXXLL element. Residues 725-770 (SAAPHTQSMQGFPPNLGSAFSTPQSPAKAFPPLSTPNQTTAFSGIG) are disordered. The interval 799–1014 (NNDPFVQRKL…QGSITTPGSI (216 aa)) is interaction with ZFP36. Phosphoserine is present on Ser1060. The segment at 1089 to 1604 (EPPENIQEKI…AQPMKQAWAT (516 aa)) is interaction with CNOT6, CNOT6L, CNOT7 and CNOT8. Basic and acidic residues predominate over residues 1314 to 1326 (QLSAPKKDVKQPE). Residues 1314-1351 (QLSAPKKDVKQPEELPAITTTTTSTTPATSTTCTATVP) form a disordered region. The segment covering 1332-1349 (TTTTTSTTPATSTTCTAT) has biased composition (low complexity). 3 consecutive short sequence motifs (LXXLL) follow at residues 1638 to 1642 (LRSLL), 1941 to 1945 (LIALL), and 2095 to 2099 (LRVLL).

The protein belongs to the CNOT1 family. Component of the CCR4-NOT complex; distinct complexes seem to exist that differ in the participation of probably mutually exclusive catalytic subunits. In the complex, interacts directly with CNOT6, CNOT6L, CNOT7 or CNOT8. Interacts in a ligand-dependent fashion with ESR1 and RXRA. Interacts with NANOS2, TOB1 and ZFP36. Interacts with TNRC6A, TNRC6B or TNRC6C; the interactions are direct. Interacts with YTHDF2; the interaction is direct and promotes recruitment of the CCR4-NOT complex to N6-methyladenosine (m6A)-containing mRNAs, leading to their deadenylation and subsequent degradation. Interacts with EIF4ENIF1/4E-T. Interacts in an RNA-independent manner with BICC1 (via KH domains). Interacts with TEX13A; the interaction may inhibit CNOT1 binding to mRNA and subsequently CNOT1-mediated mRNA degradation.

The protein localises to the cytoplasm. The protein resides in the P-body. It localises to the nucleus. Functionally, scaffolding component of the CCR4-NOT complex which is one of the major cellular mRNA deadenylases and is linked to various cellular processes including bulk mRNA degradation, miRNA-mediated repression, translational repression during translational initiation and general transcription regulation. Additional complex functions may be a consequence of its influence on mRNA expression. Its scaffolding function implies its interaction with the catalytic complex module and diverse RNA-binding proteins mediating the complex recruitment to selected mRNA 3'UTRs. Involved in degradation of AU-rich element (ARE)-containing mRNAs probably via association with ZFP36. Mediates the recruitment of the CCR4-NOT complex to miRNA targets and to the RISC complex via association with TNRC6A, TNRC6B or TNRC6C. Acts as a transcriptional repressor. Represses the ligand-dependent transcriptional activation by nuclear receptors. Involved in the maintenance of embryonic stem (ES) cell identity; prevents their differentiation towards extraembryonic trophectoderm lineages. Plays a role in rapid sperm motility via mediating timely mRNA turnover. The polypeptide is CCR4-NOT transcription complex subunit 1 (Cnot1) (Mus musculus (Mouse)).